The chain runs to 444 residues: Glutamyl-tRNA reductase (444 aa).

Residues 49–52 (TCNR), S109, 114–116 (ETQ), and Q120 each bind substrate. The active-site Nucleophile is the C50. An NADP(+)-binding site is contributed by 189-194 (GAGKMG).

Belongs to the glutamyl-tRNA reductase family. As to quaternary structure, homodimer.

The enzyme catalyses (S)-4-amino-5-oxopentanoate + tRNA(Glu) + NADP(+) = L-glutamyl-tRNA(Glu) + NADPH + H(+). The protein operates within porphyrin-containing compound metabolism; protoporphyrin-IX biosynthesis; 5-aminolevulinate from L-glutamyl-tRNA(Glu): step 1/2. Its function is as follows. Catalyzes the NADPH-dependent reduction of glutamyl-tRNA(Glu) to glutamate 1-semialdehyde (GSA). In Bacillus cereus (strain ATCC 10987 / NRS 248), this protein is Glutamyl-tRNA reductase.